Here is a 313-residue protein sequence, read N- to C-terminus: ADP-L-glycero-D-manno-heptose-6-epimerase (313 aa).

NADP(+)-binding positions include 10–11 (MI), 31–32 (DN), Lys-38, Arg-53, 75–79 (EGACS), and Asn-92. The Proton acceptor role is filled by Tyr-139. NADP(+) is bound at residue Lys-143. Asn-174 lines the substrate pocket. Residues Val-175 and Lys-183 each coordinate NADP(+). Lys-183 functions as the Proton acceptor in the catalytic mechanism. Substrate contacts are provided by residues Ser-185, His-192, 206-209 (FAGS), Arg-214, and Tyr-277.

It belongs to the NAD(P)-dependent epimerase/dehydratase family. HldD subfamily. Homopentamer. The cofactor is NADP(+).

It carries out the reaction ADP-D-glycero-beta-D-manno-heptose = ADP-L-glycero-beta-D-manno-heptose. Its pathway is nucleotide-sugar biosynthesis; ADP-L-glycero-beta-D-manno-heptose biosynthesis; ADP-L-glycero-beta-D-manno-heptose from D-glycero-beta-D-manno-heptose 7-phosphate: step 4/4. The protein operates within bacterial outer membrane biogenesis; LPS core biosynthesis. Functionally, catalyzes the interconversion between ADP-D-glycero-beta-D-manno-heptose and ADP-L-glycero-beta-D-manno-heptose via an epimerization at carbon 6 of the heptose. This Vibrio vulnificus (strain CMCP6) protein is ADP-L-glycero-D-manno-heptose-6-epimerase.